Reading from the N-terminus, the 159-residue chain is MNINIVTIGKLKEKYLKQGIEEYKKRLSAYAKIDIIELPDEKAPENLSDQDMKIVKDKEGERILAKISPDTHVIALAIEGKMKTSEELADTIDKLATYGKSKITFVIGGSLGLSDAVMKRADEKLSFSKMTFPHQLMRLILVEQIYRAFRINRGEPYHK.

S-adenosyl-L-methionine contacts are provided by residues L76, G108, and 127-132 (FSKMTF).

Belongs to the RNA methyltransferase RlmH family. In terms of assembly, homodimer.

The protein localises to the cytoplasm. It catalyses the reaction pseudouridine(1915) in 23S rRNA + S-adenosyl-L-methionine = N(3)-methylpseudouridine(1915) in 23S rRNA + S-adenosyl-L-homocysteine + H(+). Specifically methylates the pseudouridine at position 1915 (m3Psi1915) in 23S rRNA. In Bacillus velezensis (strain DSM 23117 / BGSC 10A6 / LMG 26770 / FZB42) (Bacillus amyloliquefaciens subsp. plantarum), this protein is Ribosomal RNA large subunit methyltransferase H.